A 348-amino-acid polypeptide reads, in one-letter code: Flagellar P-ring protein (348 aa).

Residues 1 to 16 (MRIFLLCLALSLSVFA) form the signal peptide.

Belongs to the FlgI family. As to quaternary structure, the basal body constitutes a major portion of the flagellar organelle and consists of four rings (L,P,S, and M) mounted on a central rod.

The protein resides in the periplasm. The protein localises to the bacterial flagellum basal body. Assembles around the rod to form the L-ring and probably protects the motor/basal body from shearing forces during rotation. This chain is Flagellar P-ring protein, found in Campylobacter lari (strain RM2100 / D67 / ATCC BAA-1060).